The chain runs to 200 residues: MTPELITFGRYLAGEFENQRQAQAEPVWYVHLRLWLRPLPLFREDSIALFAEQASIINLDQPYRPRLWRLTHSESGGLEVRHYMFNDLKSVQGAGKNPDILRKISLEDLTFLPTCTLAVKVNTLADNQYQFIAQPQPEQRCQFTYEGTTYQVALGFEVTSHSLKTYDKGLDPGTGKGIWGALLGPYQYEKKRDFSAELDV.

The protein belongs to the CpcT/CpeT biliprotein lyase family.

Covalently attaches a chromophore to Cys residue(s) of phycobiliproteins. The protein is Chromophore lyase CpcT/CpeT 2 of Microcystis aeruginosa (strain NIES-843 / IAM M-2473).